A 254-amino-acid chain; its full sequence is Receptor expression-enhancing protein 2 (254 aa).

The next 2 helical transmembrane spans lie at 1 to 21 (MVSW…YPAY) and 35 to 55 (YVKW…ETLT). S152 bears the Phosphoserine mark. The disordered stretch occupies residues 164–254 (ALPLQGPDGR…KKTSAGGDSA (91 aa)). A compositionally biased stretch (polar residues) spans 195 to 204 (SVRSGTNQAD). Over residues 205–219 (PRTEISEDDTGDKAP) the composition is skewed to basic and acidic residues.

It belongs to the DP1 family. In terms of assembly, interacts with odorant receptor proteins.

It is found in the membrane. Its function is as follows. Required for endoplasmic reticulum (ER) network formation, shaping and remodeling. May enhance the cell surface expression of odorant receptors. This chain is Receptor expression-enhancing protein 2 (REEP2), found in Bos taurus (Bovine).